The sequence spans 392 residues: Formate-dependent phosphoribosylglycinamide formyltransferase (392 aa).

N(1)-(5-phospho-beta-D-ribosyl)glycinamide contacts are provided by residues 20–21 (EL) and glutamate 80. ATP-binding positions include arginine 112, lysine 153, 158–163 (SSGKGQ), 193–196 (EGFI), and glutamate 201. The region spanning 117 to 306 (RLAAETLALP…EFALHVRAIL (190 aa)) is the ATP-grasp domain. The Mg(2+) site is built by glutamate 265 and glutamate 277. N(1)-(5-phospho-beta-D-ribosyl)glycinamide-binding positions include aspartate 284, lysine 354, and 361-362 (RR).

This sequence belongs to the PurK/PurT family. As to quaternary structure, homodimer.

It catalyses the reaction N(1)-(5-phospho-beta-D-ribosyl)glycinamide + formate + ATP = N(2)-formyl-N(1)-(5-phospho-beta-D-ribosyl)glycinamide + ADP + phosphate + H(+). It participates in purine metabolism; IMP biosynthesis via de novo pathway; N(2)-formyl-N(1)-(5-phospho-D-ribosyl)glycinamide from N(1)-(5-phospho-D-ribosyl)glycinamide (formate route): step 1/1. In terms of biological role, involved in the de novo purine biosynthesis. Catalyzes the transfer of formate to 5-phospho-ribosyl-glycinamide (GAR), producing 5-phospho-ribosyl-N-formylglycinamide (FGAR). Formate is provided by PurU via hydrolysis of 10-formyl-tetrahydrofolate. This chain is Formate-dependent phosphoribosylglycinamide formyltransferase, found in Shewanella amazonensis (strain ATCC BAA-1098 / SB2B).